The chain runs to 369 residues: 4-hydroxy-3-methylbut-2-en-1-yl diphosphate synthase (flavodoxin) (369 aa).

4 residues coordinate [4Fe-4S] cluster: cysteine 270, cysteine 273, cysteine 305, and glutamate 312.

The protein belongs to the IspG family. It depends on [4Fe-4S] cluster as a cofactor.

The catalysed reaction is (2E)-4-hydroxy-3-methylbut-2-enyl diphosphate + oxidized [flavodoxin] + H2O + 2 H(+) = 2-C-methyl-D-erythritol 2,4-cyclic diphosphate + reduced [flavodoxin]. It participates in isoprenoid biosynthesis; isopentenyl diphosphate biosynthesis via DXP pathway; isopentenyl diphosphate from 1-deoxy-D-xylulose 5-phosphate: step 5/6. Converts 2C-methyl-D-erythritol 2,4-cyclodiphosphate (ME-2,4cPP) into 1-hydroxy-2-methyl-2-(E)-butenyl 4-diphosphate. The protein is 4-hydroxy-3-methylbut-2-en-1-yl diphosphate synthase (flavodoxin) of Pseudomonas savastanoi pv. phaseolicola (strain 1448A / Race 6) (Pseudomonas syringae pv. phaseolicola (strain 1448A / Race 6)).